Reading from the N-terminus, the 232-residue chain is 6-phosphogluconolactonase (232 aa).

The protein belongs to the glucosamine/galactosamine-6-phosphate isomerase family. 6-phosphogluconolactonase subfamily.

The catalysed reaction is 6-phospho-D-glucono-1,5-lactone + H2O = 6-phospho-D-gluconate + H(+). It functions in the pathway carbohydrate degradation; pentose phosphate pathway; D-ribulose 5-phosphate from D-glucose 6-phosphate (oxidative stage): step 2/3. Hydrolysis of 6-phosphogluconolactone to 6-phosphogluconate. This Aggregatibacter actinomycetemcomitans (Actinobacillus actinomycetemcomitans) protein is 6-phosphogluconolactonase (pgl).